Here is a 122-residue protein sequence, read N- to C-terminus: Urease subunit beta (122 aa).

It belongs to the urease beta subunit family. As to quaternary structure, heterotrimer of UreA (gamma), UreB (beta) and UreC (alpha) subunits. Three heterotrimers associate to form the active enzyme.

Its subcellular location is the cytoplasm. It carries out the reaction urea + 2 H2O + H(+) = hydrogencarbonate + 2 NH4(+). It functions in the pathway nitrogen metabolism; urea degradation; CO(2) and NH(3) from urea (urease route): step 1/1. This chain is Urease subunit beta, found in Lysinibacillus sphaericus (strain C3-41).